Reading from the N-terminus, the 337-residue chain is Probable tyrosine--tRNA ligase, cytoplasmic (337 aa).

Y35 serves as a coordination point for L-tyrosine. The 'HIGH' region signature appears at 40 to 48; it reads ITGKPHIAY. 4 residues coordinate L-tyrosine: Y162, Q166, D169, and Q184. The 'KMSKS' region motif lies at 218–222; the sequence is KMSSS.

The protein belongs to the class-I aminoacyl-tRNA synthetase family. Homodimer.

It is found in the cytoplasm. It carries out the reaction tRNA(Tyr) + L-tyrosine + ATP = L-tyrosyl-tRNA(Tyr) + AMP + diphosphate + H(+). The chain is Probable tyrosine--tRNA ligase, cytoplasmic from Encephalitozoon cuniculi (strain GB-M1) (Microsporidian parasite).